The primary structure comprises 245 residues: MTFTASSSSCAITESPVVVALDYHERDKALAFVDKIDPRDCRLKVGKEMFTLFGPQLVRDLQQRGFDVFLDLKFHDIPNTTARAVAAAADLGVWMVNVHASGGARMMAAARDALAPFGKDAPLLIAVTVLTSMETSDLRDLGVTLSPAEHAERLARLTQQCGLDGVVCSAQEAVRFKQVFGAAFKLVTPGIRPAGSEAGDQRRIMTPEQALSAGVDYMVIGRPVTQSVDPAQTLKDINASLKREA.

Residues D22, K44, 71–80 (DLKFHDIPNT), T131, R192, Q201, G221, and R222 each bind substrate. Catalysis depends on K73, which acts as the Proton donor.

It belongs to the OMP decarboxylase family. Type 1 subfamily. As to quaternary structure, homodimer.

It carries out the reaction orotidine 5'-phosphate + H(+) = UMP + CO2. Its pathway is pyrimidine metabolism; UMP biosynthesis via de novo pathway; UMP from orotate: step 2/2. In terms of biological role, catalyzes the decarboxylation of orotidine 5'-monophosphate (OMP) to uridine 5'-monophosphate (UMP). This is Orotidine 5'-phosphate decarboxylase from Salmonella paratyphi A (strain ATCC 9150 / SARB42).